A 130-amino-acid chain; its full sequence is DNA-directed RNA polymerase subunit omega (130 aa).

The segment at 107–130 (SLDVSQESHDDEIDDQDSGEEVPI) is disordered. Over residues 115–130 (HDDEIDDQDSGEEVPI) the composition is skewed to acidic residues.

The protein belongs to the RNA polymerase subunit omega family. In terms of assembly, the RNAP catalytic core consists of 2 alpha, 1 beta, 1 beta' and 1 omega subunit. When a sigma factor is associated with the core the holoenzyme is formed, which can initiate transcription.

It catalyses the reaction RNA(n) + a ribonucleoside 5'-triphosphate = RNA(n+1) + diphosphate. Functionally, promotes RNA polymerase assembly. Latches the N- and C-terminal regions of the beta' subunit thereby facilitating its interaction with the beta and alpha subunits. This is DNA-directed RNA polymerase subunit omega from Wolbachia pipientis subsp. Culex pipiens (strain wPip).